Here is a 437-residue protein sequence, read N- to C-terminus: GTPase HflX (437 aa).

The disordered stretch occupies residues 150–173; it reads DRQGGGSGGGKGGGGAARGEGEKQ. Residues 152-167 show a composition bias toward gly residues; sequence QGGGSGGGKGGGGAAR. The region spanning 212 to 382 is the Hflx-type G domain; the sequence is ATAAIVGYTN…ACVEMLESRV (171 aa). GTP contacts are provided by residues 218–225, 243–247, 265–268, 331–334, and 360–362; these read GYTNAGKS, FATLD, DTVG, NKVD, and SVK. Positions 225 and 245 each coordinate Mg(2+).

It belongs to the TRAFAC class OBG-HflX-like GTPase superfamily. HflX GTPase family. In terms of assembly, monomer. Associates with the 50S ribosomal subunit. Requires Mg(2+) as cofactor.

The protein localises to the cytoplasm. Its function is as follows. GTPase that associates with the 50S ribosomal subunit and may have a role during protein synthesis or ribosome biogenesis. In Akkermansia muciniphila (strain ATCC BAA-835 / DSM 22959 / JCM 33894 / BCRC 81048 / CCUG 64013 / CIP 107961 / Muc), this protein is GTPase HflX.